The chain runs to 251 residues: Gamma-interferon-inducible lysosomal thiol reductase (251 aa).

The N-terminal stretch at 1–21 is a signal peptide; sequence MFGFRLSVLLFAVCSLSACSC. The 39-residue stretch at 22–60 folds into the Saposin A-type domain; sequence MFVNSCKYPPSQWCDSRDIAAQCGVLEQCMKFNASPVTV. A disulfide bridge connects residues Cys-68 and Cys-71. Asn-108 carries an N-linked (GlcNAc...) asparagine glycan.

This sequence belongs to the GILT family. Dimer; disulfide-linked. As to expression, highly expressed in spleen and kidney. Also detected at lower levels in liver, heart, brain, intestine and gill.

The protein resides in the secreted. The protein localises to the lysosome. Its function is as follows. Lysosomal thiol reductase that can reduce protein disulfide bonds. May facilitate the complete unfolding of proteins destined for lysosomal degradation. Plays an important role in antigen processing. This Carassius auratus (Goldfish) protein is Gamma-interferon-inducible lysosomal thiol reductase.